The chain runs to 185 residues: Protein GrpE (185 aa).

Residues 1-12 (MADEQLNEKDLN) show a composition bias toward basic and acidic residues. The tract at residues 1–22 (MADEQLNEKDLNVEETGAGNAA) is disordered.

It belongs to the GrpE family. Homodimer.

The protein resides in the cytoplasm. Its function is as follows. Participates actively in the response to hyperosmotic and heat shock by preventing the aggregation of stress-denatured proteins, in association with DnaK and GrpE. It is the nucleotide exchange factor for DnaK and may function as a thermosensor. Unfolded proteins bind initially to DnaJ; upon interaction with the DnaJ-bound protein, DnaK hydrolyzes its bound ATP, resulting in the formation of a stable complex. GrpE releases ADP from DnaK; ATP binding to DnaK triggers the release of the substrate protein, thus completing the reaction cycle. Several rounds of ATP-dependent interactions between DnaJ, DnaK and GrpE are required for fully efficient folding. The sequence is that of Protein GrpE from Pseudomonas putida (strain ATCC 700007 / DSM 6899 / JCM 31910 / BCRC 17059 / LMG 24140 / F1).